Here is a 228-residue protein sequence, read N- to C-terminus: FAS1 domain-containing protein NCU02579 (228 aa).

The signal sequence occupies residues Met1–Ala18. The segment at Pro50–Gly74 is disordered. Residues Ser77 to Arg225 enclose the FAS1 domain.

It localises to the vacuole. This is FAS1 domain-containing protein NCU02579 from Neurospora crassa (strain ATCC 24698 / 74-OR23-1A / CBS 708.71 / DSM 1257 / FGSC 987).